Here is an 860-residue protein sequence, read N- to C-terminus: Spindle and centriole-associated protein 1 (860 aa).

4 disordered regions span residues 127-150, 172-201, 230-250, and 294-332; these read RKRT…GINQ, DDAG…HSNR, ATQS…AEDQ, and PLLA…TGSS. Polar residues-rich tracts occupy residues 139–150, 190–200, and 230–245; these read PDSSQSHTGINQ, ELPNSLSQHSN, and ATQS…SSEL. Phosphothreonine is present on Thr236. Ser240 is modified (phosphoserine). Residues 317-329 are compositionally biased toward low complexity; sequence SSSTASADRPSST. The stretch at 383–439 forms a coiled coil; the sequence is RYLKESEIQLRKEVETRQQLEQMLGDHRELIDALTAEILSLREENSTMQARLQQYMV. Positions 623 to 645 are disordered; the sequence is PAFVSLSQPPCSSLPSTQQPRNP. Over residues 627-642 the composition is skewed to low complexity; sequence SLSQPPCSSLPSTQQP. At Ser648 the chain carries Phosphoserine. A disordered region spans residues 693–718; that stretch reads ITSSGGEQGDGLREPRKQGSASEVST. Positions 729–757 form a coiled coil; the sequence is SSMEERIAELNRQSMEARSKLLQLIEQQK. Phosphoserine is present on residues Ser765, Ser766, Ser769, and Ser824. The segment at 792–860 is disordered; it reads GMEASESSKC…GWFALSAHIP (69 aa). A compositionally biased stretch (low complexity) spans 804–824; it reads VSPVSGNSSRRSSGAISNSCS.

Interacts with CEP120.

The protein resides in the cytoplasm. The protein localises to the cytoskeleton. Its subcellular location is the microtubule organizing center. It is found in the centrosome. It localises to the centriole. The protein resides in the spindle. In terms of biological role, regulator required for centriole duplication, for proper bipolar spindle formation and chromosome congression in mitosis. This is Spindle and centriole-associated protein 1 (Spice1) from Mus musculus (Mouse).